Reading from the N-terminus, the 209-residue chain is Inorganic pyrophosphatase (209 aa).

Substrate contacts are provided by lysine 38, arginine 52, and tyrosine 64. Residues aspartate 92, aspartate 97, and aspartate 130 each contribute to the Mg(2+) site. Position 167 (tyrosine 167) interacts with substrate.

Belongs to the PPase family. In terms of assembly, homohexamer. Requires Mg(2+) as cofactor.

The protein resides in the cytoplasm. It catalyses the reaction diphosphate + H2O = 2 phosphate + H(+). In terms of biological role, catalyzes the hydrolysis of inorganic pyrophosphate (PPi) forming two phosphate ions. This chain is Inorganic pyrophosphatase, found in Chlamydia trachomatis serovar L2 (strain ATCC VR-902B / DSM 19102 / 434/Bu).